Reading from the N-terminus, the 334-residue chain is Ornithine carbamoyltransferase (334 aa).

Residues Ser-57–Thr-60, Gln-84, Arg-108, and His-135–Gln-138 contribute to the carbamoyl phosphate site. Residues Asn-169, Asp-233, and Ser-237–Met-238 each bind L-ornithine. Carbamoyl phosphate contacts are provided by residues Cys-275–Leu-276 and Arg-320.

The protein belongs to the aspartate/ornithine carbamoyltransferase superfamily. OTCase family.

It is found in the cytoplasm. The enzyme catalyses carbamoyl phosphate + L-ornithine = L-citrulline + phosphate + H(+). The protein operates within amino-acid biosynthesis; L-arginine biosynthesis; L-arginine from L-ornithine and carbamoyl phosphate: step 1/3. Reversibly catalyzes the transfer of the carbamoyl group from carbamoyl phosphate (CP) to the N(epsilon) atom of ornithine (ORN) to produce L-citrulline. This chain is Ornithine carbamoyltransferase, found in Aeromonas hydrophila subsp. hydrophila (strain ATCC 7966 / DSM 30187 / BCRC 13018 / CCUG 14551 / JCM 1027 / KCTC 2358 / NCIMB 9240 / NCTC 8049).